A 321-amino-acid chain; its full sequence is Lipoyl synthase (321 aa).

[4Fe-4S] cluster is bound by residues Cys68, Cys73, Cys79, Cys94, Cys98, Cys101, and Ser308. The Radical SAM core domain occupies 80–297 (FNHGTATFMI…KEIALELGFT (218 aa)).

It belongs to the radical SAM superfamily. Lipoyl synthase family. The cofactor is [4Fe-4S] cluster.

It localises to the cytoplasm. It carries out the reaction [[Fe-S] cluster scaffold protein carrying a second [4Fe-4S](2+) cluster] + N(6)-octanoyl-L-lysyl-[protein] + 2 oxidized [2Fe-2S]-[ferredoxin] + 2 S-adenosyl-L-methionine + 4 H(+) = [[Fe-S] cluster scaffold protein] + N(6)-[(R)-dihydrolipoyl]-L-lysyl-[protein] + 4 Fe(3+) + 2 hydrogen sulfide + 2 5'-deoxyadenosine + 2 L-methionine + 2 reduced [2Fe-2S]-[ferredoxin]. Its pathway is protein modification; protein lipoylation via endogenous pathway; protein N(6)-(lipoyl)lysine from octanoyl-[acyl-carrier-protein]: step 2/2. Functionally, catalyzes the radical-mediated insertion of two sulfur atoms into the C-6 and C-8 positions of the octanoyl moiety bound to the lipoyl domains of lipoate-dependent enzymes, thereby converting the octanoylated domains into lipoylated derivatives. The protein is Lipoyl synthase of Aliivibrio fischeri (strain ATCC 700601 / ES114) (Vibrio fischeri).